The primary structure comprises 409 residues: NADH-quinone oxidoreductase subunit D (409 aa).

Belongs to the complex I 49 kDa subunit family. NDH-1 is composed of 14 different subunits. Subunits NuoB, C, D, E, F, and G constitute the peripheral sector of the complex.

The protein resides in the cell inner membrane. It catalyses the reaction a quinone + NADH + 5 H(+)(in) = a quinol + NAD(+) + 4 H(+)(out). In terms of biological role, NDH-1 shuttles electrons from NADH, via FMN and iron-sulfur (Fe-S) centers, to quinones in the respiratory chain. The immediate electron acceptor for the enzyme in this species is believed to be ubiquinone. Couples the redox reaction to proton translocation (for every two electrons transferred, four hydrogen ions are translocated across the cytoplasmic membrane), and thus conserves the redox energy in a proton gradient. The sequence is that of NADH-quinone oxidoreductase subunit D (nuoD) from Thermus thermophilus (strain ATCC BAA-163 / DSM 7039 / HB27).